The primary structure comprises 229 residues: Glucose-induced degradation protein 8-B homolog (229 aa).

The region spanning 26–58 (QRADMNRLIMNYLVTEGFKEAAEKFRMESGIEP) is the LisH domain. The CTLH domain maps to 64–121 (SLDERIKIREMVLKGQIQEAIALINSLHPELLDTNRYLYFHLQQQHLIELIRLRETEA).

Identified in the CTLH complex that contains at least MAEA, RMND5A (or alternatively its paralog RMND5B), GID8, WDR26, and RANBP9 and/or RANBP10. Interacts with CTNNB1.

It is found in the cytoplasm. The protein localises to the nucleus. Its function is as follows. Core component of the CTLH E3 ubiquitin-protein ligase complex that selectively accepts ubiquitin from UBE2H and mediates ubiquitination and subsequent proteasomal degradation of target proteins. Acts as a positive regulator of Wnt signaling pathway by promoting beta-catenin (CTNNB1) nuclear accumulation. Required for normal Wnt signaling and normal dorsoventral patterning during embryogenesis. The polypeptide is Glucose-induced degradation protein 8-B homolog (gid8b) (Danio rerio (Zebrafish)).